A 278-amino-acid chain; its full sequence is Large ribosomal subunit protein uL2 (278 aa).

The disordered stretch occupies residues 223 to 278; the sequence is RGSAMNPNDHPHGGGEGKAPVGRKAPMTPWGKKALGVKTRNKKKASTKLIVRRRTK. The span at 261–278 shows a compositional bias: basic residues; it reads TRNKKKASTKLIVRRRTK.

Belongs to the universal ribosomal protein uL2 family. Part of the 50S ribosomal subunit. Forms a bridge to the 30S subunit in the 70S ribosome.

One of the primary rRNA binding proteins. Required for association of the 30S and 50S subunits to form the 70S ribosome, for tRNA binding and peptide bond formation. It has been suggested to have peptidyltransferase activity; this is somewhat controversial. Makes several contacts with the 16S rRNA in the 70S ribosome. The chain is Large ribosomal subunit protein uL2 from Spiroplasma kunkelii.